We begin with the raw amino-acid sequence, 59 residues long: Large ribosomal subunit protein bL32 (59 aa).

The protein belongs to the bacterial ribosomal protein bL32 family.

This Polynucleobacter necessarius subsp. necessarius (strain STIR1) protein is Large ribosomal subunit protein bL32.